The primary structure comprises 185 residues: NADH-quinone oxidoreductase subunit B (185 aa).

[4Fe-4S] cluster-binding residues include cysteine 64, cysteine 65, cysteine 129, and cysteine 159.

It belongs to the complex I 20 kDa subunit family. NDH-1 is composed of 14 different subunits. Subunits NuoB, C, D, E, F, and G constitute the peripheral sector of the complex. It depends on [4Fe-4S] cluster as a cofactor.

The protein resides in the cell inner membrane. The catalysed reaction is a quinone + NADH + 5 H(+)(in) = a quinol + NAD(+) + 4 H(+)(out). Functionally, NDH-1 shuttles electrons from NADH, via FMN and iron-sulfur (Fe-S) centers, to quinones in the respiratory chain. Couples the redox reaction to proton translocation (for every two electrons transferred, four hydrogen ions are translocated across the cytoplasmic membrane), and thus conserves the redox energy in a proton gradient. The polypeptide is NADH-quinone oxidoreductase subunit B (Rhodospirillum rubrum (strain ATCC 11170 / ATH 1.1.1 / DSM 467 / LMG 4362 / NCIMB 8255 / S1)).